The following is a 345-amino-acid chain: tRNA N6-adenosine threonylcarbamoyltransferase (345 aa).

Positions 113 and 117 each coordinate Fe cation. Substrate contacts are provided by residues 142 to 146 (AISGG), D175, G188, D192, and N282. Fe cation is bound at residue D310.

The protein belongs to the KAE1 / TsaD family. Requires Fe(2+) as cofactor.

It localises to the cytoplasm. The enzyme catalyses L-threonylcarbamoyladenylate + adenosine(37) in tRNA = N(6)-L-threonylcarbamoyladenosine(37) in tRNA + AMP + H(+). Its function is as follows. Required for the formation of a threonylcarbamoyl group on adenosine at position 37 (t(6)A37) in tRNAs that read codons beginning with adenine. Is involved in the transfer of the threonylcarbamoyl moiety of threonylcarbamoyl-AMP (TC-AMP) to the N6 group of A37, together with TsaE and TsaB. TsaD likely plays a direct catalytic role in this reaction. The protein is tRNA N6-adenosine threonylcarbamoyltransferase of Bdellovibrio bacteriovorus (strain ATCC 15356 / DSM 50701 / NCIMB 9529 / HD100).